A 267-amino-acid polypeptide reads, in one-letter code: tRNA pseudouridine synthase A (267 aa).

The active-site Nucleophile is Asp-51. Tyr-109 contacts substrate.

This sequence belongs to the tRNA pseudouridine synthase TruA family. As to quaternary structure, homodimer.

The catalysed reaction is uridine(38/39/40) in tRNA = pseudouridine(38/39/40) in tRNA. In terms of biological role, formation of pseudouridine at positions 38, 39 and 40 in the anticodon stem and loop of transfer RNAs. This chain is tRNA pseudouridine synthase A, found in Staphylococcus aureus (strain MSSA476).